Consider the following 149-residue polypeptide: Large ribosomal subunit protein bL9 (149 aa).

It belongs to the bacterial ribosomal protein bL9 family.

Functionally, binds to the 23S rRNA. This Helicobacter pylori (strain HPAG1) protein is Large ribosomal subunit protein bL9.